The primary structure comprises 160 residues: Conopressin/conophysin, isoform 2 (160 aa).

The first 30 residues, 1–30 (MKCSVLQMSRLSWAMCLMLLMLLLLGTAQG), serve as a signal peptide directing secretion. A disulfide bond links C31 and C36. The residue at position 39 (G39) is a Glycine amide. Residues 40-47 (GKRAVDAL) constitute a propeptide that is removed on maturation. Cystine bridges form between C53–C97, C56–C70, C64–C87, C71–C77, C104–C118, C112–C130, and C119–C124.

The protein belongs to the vasopressin/oxytocin family. As to expression, expressed by the venom gland.

Its subcellular location is the secreted. Functionally, targets vasopressin-oxytocin related receptors. This chain is Conopressin/conophysin, isoform 2, found in Conus monile (Necklace cone).